We begin with the raw amino-acid sequence, 474 residues long: Synaptotagmin-17 (474 aa).

The interval 60 to 112 (WLMASRSSDKDGDSVHTASEVPLTPRTNSPDGRRSSSDTSKSTYSLTRRISSL) is disordered. The segment covering 96–112 (SDTSKSTYSLTRRISSL) has biased composition (low complexity). Phosphoserine occurs at positions 118 and 119. 2 consecutive C2 domains span residues 184 to 310 (QLGM…HWWK) and 321 to 455 (ELGE…EQWH).

It belongs to the synaptotagmin family. In terms of tissue distribution, expressed abundantly in brain (frontal and temporal lobes, hippocampus, hypothalamus, amygdala, substantia nigra, and pituitary), kidney, and prostate. Expressed in fetal brain, kidney and lung. Expressed in melanocytes.

It localises to the membrane. Plays a role in dendrite formation by melanocytes. In Homo sapiens (Human), this protein is Synaptotagmin-17 (SYT17).